A 352-amino-acid chain; its full sequence is Heat-inducible transcription repressor HrcA (352 aa).

This sequence belongs to the HrcA family.

In terms of biological role, negative regulator of class I heat shock genes (grpE-dnaK-dnaJ and groELS operons). Prevents heat-shock induction of these operons. This Ralstonia nicotianae (strain ATCC BAA-1114 / GMI1000) (Ralstonia solanacearum) protein is Heat-inducible transcription repressor HrcA.